The following is a 233-amino-acid chain: ATP synthase subunit a (233 aa).

Helical transmembrane passes span 27 to 47 (ANFV…FAIL), 85 to 105 (YLAF…IGVV), 114 to 134 (VPSV…IVGV), 143 to 163 (LAHF…IELV), 189 to 209 (VFLK…HVFV), and 210 to 230 (SFLQ…GAVA).

Belongs to the ATPase A chain family. As to quaternary structure, F-type ATPases have 2 components, CF(1) - the catalytic core - and CF(0) - the membrane proton channel. CF(1) has five subunits: alpha(3), beta(3), gamma(1), delta(1), epsilon(1). CF(0) has three main subunits: a(1), b(2) and c(9-12). The alpha and beta chains form an alternating ring which encloses part of the gamma chain. CF(1) is attached to CF(0) by a central stalk formed by the gamma and epsilon chains, while a peripheral stalk is formed by the delta and b chains.

The protein resides in the cell inner membrane. In terms of biological role, key component of the proton channel; it plays a direct role in the translocation of protons across the membrane. The sequence is that of ATP synthase subunit a from Solibacter usitatus (strain Ellin6076).